We begin with the raw amino-acid sequence, 341 residues long: Anthranilate phosphoribosyltransferase (341 aa).

5-phospho-alpha-D-ribose 1-diphosphate is bound by residues glycine 81, 84-85 (GD), threonine 89, 91-94 (NIST), 109-117 (KHGNRKASS), and threonine 121. Glycine 81 contacts anthranilate. Mg(2+) is bound at residue serine 93. Asparagine 112 contacts anthranilate. Position 167 (arginine 167) interacts with anthranilate. Mg(2+)-binding residues include aspartate 226 and glutamate 227.

This sequence belongs to the anthranilate phosphoribosyltransferase family. In terms of assembly, homodimer. Mg(2+) serves as cofactor.

It catalyses the reaction N-(5-phospho-beta-D-ribosyl)anthranilate + diphosphate = 5-phospho-alpha-D-ribose 1-diphosphate + anthranilate. It participates in amino-acid biosynthesis; L-tryptophan biosynthesis; L-tryptophan from chorismate: step 2/5. Its function is as follows. Catalyzes the transfer of the phosphoribosyl group of 5-phosphorylribose-1-pyrophosphate (PRPP) to anthranilate to yield N-(5'-phosphoribosyl)-anthranilate (PRA). In Parvibaculum lavamentivorans (strain DS-1 / DSM 13023 / NCIMB 13966), this protein is Anthranilate phosphoribosyltransferase.